Consider the following 541-residue polypeptide: Transcription factor STP2 (541 aa).

The i stretch occupies residues 13-32 (VLTRIYDYLKALVQQVIVPN). A disordered region spans residues 35–58 (DDKSSKSTPFEKLEPAKQNHPQKD). Residues 73-105 (LFPKQNNKQLSLTSKSSVVPCALNLDNLETPFS) form an II region. The segment at 204 to 226 (YICHYCDARFRIRGYLTRHIKKH) adopts a C2H2-type 1 zinc-finger fold. The C2H2-type 2; atypical zinc-finger motif lies at 232-267 (YHCPFFDNSISQELRCHTSGGFSRRDTYKTHLKSRH). A C2H2-type 3; atypical zinc finger spans residues 284–309 (GVCTQCGEHFSTSESWVENHIEAGSC). The segment covering 452 to 462 (SSASSALSPLS) has biased composition (low complexity). Positions 452 to 497 (SSASSALSPLSGDPITTTETNKSYPLDSEQSLLEPDKTEEDAINQS) are disordered. A compositionally biased stretch (polar residues) spans 465–482 (PITTTETNKSYPLDSEQS).

In terms of assembly, interacts (via Region II) with SSY5; protease component of the SPS-sensor. Post-translationally, activated by the amino acid-induced proteolytic removal of an N-terminal inhibitory domain by serine protease SSY5, an intrinsic component of the SPS-sensor. Processing requires at least 2 components of the SCF(GRR1) ubiquitin ligase complex, namely the F-box protein GRR1 and the E2 enzyme CDC34, but does not depend on the proteasome. Processing is negatively regulated by the protein phosphatase 2A regulatory subunit RTS1.

It is found in the cell membrane. The protein resides in the nucleus. Its function is as follows. Transcription factor involved in the regulation of gene expression in response to extracellular amino acid levels. Synthesized as latent cytoplasmic precursor, which, upon a signal initiated by the plasma membrane SPS (SSY1-PTR3-SSY5) amino acid sensor system, becomes proteolytically activated and relocates to the nucleus, where it induces the expression of SPS-sensor-regulated genes, including the amino-acid permeases BAP2 and BAP3. Binding to promoters is facilitated by DAL81. Involved in the repression of genes subject to nitrogen catabolite repression and genes involved in stress response. Negatively regulated by inner nuclear membrane proteins ASI1, ASI2 and ASI3, which prevent unprocessed precursor forms that escape cytoplasmic anchoring from inducing SPS-sensor-regulated genes. In Saccharomyces cerevisiae (strain ATCC 204508 / S288c) (Baker's yeast), this protein is Transcription factor STP2 (STP2).